Reading from the N-terminus, the 687-residue chain is E3 ubiquitin-protein ligase RNF19B (687 aa).

Residues 1–294 (MRLRNDCLVR…VCGCEFCWLC (294 aa)) are required for ubiquitin ligase activity and for protection against staurosporin-induced cell death. The disordered stretch occupies residues 53–88 (RTRAAPEPSVPSPPPSPPPPPPPPVSVPPPPSSPGG). The segment covering 60-85 (PSVPSPPPSPPPPPPPPVSVPPPPSS) has biased composition (pro residues). A TRIAD supradomain region spans residues 91-313 (SLIECPLCLV…LSPSGCTFWG (223 aa)). 14 residues coordinate Zn(2+): C95, C98, C118, C121, C182, C187, C204, C209, C214, C217, H222, C227, C263, and C266. The segment at 95-144 (CPLCLVRQPPEEIPELLSCRHRSCLRCLRQYLRIEICESRVNLRCPECAE) adopts an RING-type 1 zinc-finger fold. The IBR-type zinc finger occupies 161 to 227 (TRKYEEFLLR…KHVWHPNQTC (67 aa)). The RING-type 2; atypical zinc finger occupies 263 to 294 (CPRCSAYIIKMNDGSCNHMTCSVCGCEFCWLC). The active site involves C278. Zn(2+) contacts are provided by C283, C286, C291, C294, H302, and C309. A run of 2 helical transmembrane segments spans residues 330 to 350 (LIGA…AMVI) and 391 to 411 (VVAA…VYGV). The tract at residues 618 to 662 (SIRSDLESSDAQSDDVPDLASEEYDSPHLFPPSPSNALQESPPHR) is disordered. The span at 629–641 (QSDDVPDLASEEY) shows a compositional bias: acidic residues.

The protein belongs to the RBR family. RNF19 subfamily. As to quaternary structure, interacts with UBE2L3, UBE2L6 and UCKL1.

It localises to the cytoplasmic granule membrane. Its subcellular location is the endoplasmic reticulum membrane. The enzyme catalyses [E2 ubiquitin-conjugating enzyme]-S-ubiquitinyl-L-cysteine + [acceptor protein]-L-lysine = [E2 ubiquitin-conjugating enzyme]-L-cysteine + [acceptor protein]-N(6)-ubiquitinyl-L-lysine.. It participates in protein modification; protein ubiquitination. Functionally, E3 ubiquitin-protein ligase which accepts ubiquitin from E2 ubiquitin-conjugating enzymes UBE2L3 and UBE2L6 in the form of a thioester and then directly transfers the ubiquitin to targeted substrates, such as UCKL1. Involved in the cytolytic activity of natural killer cells and cytotoxic T-cells. Protects against staurosporin-induced cell death. This Xenopus laevis (African clawed frog) protein is E3 ubiquitin-protein ligase RNF19B (rnf19b).